We begin with the raw amino-acid sequence, 79 residues long: Translation initiation factor IF-1, chloroplastic (79 aa).

The region spanning 1-74 (MTRKNIDLIE…HRGRITFRLR (74 aa)) is the S1-like domain.

Belongs to the IF-1 family. Component of the 30S ribosomal translation pre-initiation complex which assembles on the 30S ribosome in the order IF-2 and IF-3, IF-1 and N-formylmethionyl-tRNA(fMet); mRNA recruitment can occur at any time during PIC assembly.

The protein resides in the plastid. The protein localises to the chloroplast. Its function is as follows. One of the essential components for the initiation of protein synthesis. Stabilizes the binding of IF-2 and IF-3 on the 30S subunit to which N-formylmethionyl-tRNA(fMet) subsequently binds. Helps modulate mRNA selection, yielding the 30S pre-initiation complex (PIC). Upon addition of the 50S ribosomal subunit IF-1, IF-2 and IF-3 are released leaving the mature 70S translation initiation complex. In Chlorella vulgaris (Green alga), this protein is Translation initiation factor IF-1, chloroplastic.